Reading from the N-terminus, the 555-residue chain is Cytochrome P450 78A11 (555 aa).

Residues 12-32 (VDATWWAYALPALLGADTLCA) traverse the membrane as a helical segment. Cys-495 is a binding site for heme.

Belongs to the cytochrome P450 family. It depends on heme as a cofactor. As to expression, expressed in seedlings, shoot apices and young panicles, but not in mature leaves, calli and roots.

The protein localises to the membrane. Its function is as follows. Involved in the regular timing (plastochron) of lateral organs formation. May regulate the rate of leaf initiation and the duration of vegetative phase. Seems to be redundant to the function of PLASTOCHRON2, but to act in an independent pathway. This Oryza sativa subsp. japonica (Rice) protein is Cytochrome P450 78A11 (CYP78A11).